A 313-amino-acid chain; its full sequence is Ribosomal RNA small subunit methyltransferase H (313 aa).

S-adenosyl-L-methionine-binding positions include 35–37 (GGH), Asp55, Phe81, Asp103, and Gln110.

Belongs to the methyltransferase superfamily. RsmH family.

It localises to the cytoplasm. It catalyses the reaction cytidine(1402) in 16S rRNA + S-adenosyl-L-methionine = N(4)-methylcytidine(1402) in 16S rRNA + S-adenosyl-L-homocysteine + H(+). In terms of biological role, specifically methylates the N4 position of cytidine in position 1402 (C1402) of 16S rRNA. The sequence is that of Ribosomal RNA small subunit methyltransferase H from Pseudomonas paraeruginosa (strain DSM 24068 / PA7) (Pseudomonas aeruginosa (strain PA7)).